Consider the following 5099-residue polypeptide: Malformin synthetase mlfA (5099 aa).

The tract at residues 224–615 is adenylation 1; it reads QRHAADRPHS…CGRADTQVKL (392 aa). Residues 756-829 enclose the Carrier 1 domain; sequence THLENEIQLA…EAASLAKVRD (74 aa). Position 790 is an O-(pantetheine 4'-phosphoryl)serine (Ser790). The tract at residues 867 to 1297 is condensation 1; that stretch reads EDVFPCTSMQ…PVDSLTLLKP (431 aa). The adenylation 2 stretch occupies residues 1325–1717; sequence DRWVNRQPDT…GRKDTQVKLR (393 aa). In terms of domain architecture, Carrier 2 spans 1857–1934; that stretch reads ARAPELERTL…QIATQCEGIA (78 aa). Position 1894 is an O-(pantetheine 4'-phosphoryl)serine (Ser1894). Positions 1995–2040 are disordered; that stretch reads MQQESSSSPAPSVSSSSSSSSAPKPLLAQPEPPTNLRDSVPEPFSL. Low complexity predominate over residues 1999-2017; it reads SSSSPAPSVSSSSSSSSAP. The interval 2067–2482 is condensation 2; it reads EDIYPATPLQ…ALSPGDKKVL (416 aa). The adenylation 3 stretch occupies residues 2505–2897; it reads LSTPHAPAVC…VGRKDGQLKL (393 aa). Positions 3032–3108 constitute a Carrier 3 domain; the sequence is RPATAQERGL…RLVLHLQNTS (77 aa). The residue at position 3069 (Ser3069) is an O-(pantetheine 4'-phosphoryl)serine. Condensation regions lie at residues 3125–3589 and 3610–4033; these read WVHL…TYDQ and DIYP…QQAM. Residues 4058–4446 are adenylation 4; sequence YANREAVCAW…VGRKDSQIKF (389 aa). In terms of domain architecture, Carrier 4 spans 4581–4657; the sequence is PPSTGMQQGI…DLAEHISSRV (77 aa). The residue at position 4618 (Ser4618) is an O-(pantetheine 4'-phosphoryl)serine. The tract at residues 4696–5017 is condensation 5; sequence DILPTTGFQR…LQTVVQHQNV (322 aa).

Belongs to the NRP synthetase family.

The protein operates within secondary metabolite biosynthesis. In terms of biological role, nonribosomal peptide synthetase; part of the gene cluster that mediates the biosynthesis of malformins, cyclic pentapeptides with a disulfide bond between 2 consecutive cysteins, that show potential anti-tumor as well as antimalarial and antitrypanosomal properties. The nonribosomal peptide synthetase mlfA is responsible of the formation of the cyclic pentapeptide. The malformin biosynthesis clusters in malformin-producing fungi also contain enzymes involved in the formation of the disulfide bond between the two consecutive cysteins within malformins, in addition to additional tailoring enzymes such as methyltransferases or oxidoreductases. They are also composed of up to 4 major facilitator superfamily transporters, and transcription factors probably involved in the regulation of the expression of those clusters. In Aspergillus sclerotiicarbonarius (strain CBS 121057 / IBT 28362), this protein is Malformin synthetase mlfA.